The chain runs to 505 residues: Phase 1 flagellin (505 aa).

This sequence belongs to the bacterial flagellin family.

It localises to the secreted. The protein localises to the bacterial flagellum. Flagellin is the subunit protein which polymerizes to form the filaments of bacterial flagella. This Salmonella naestved protein is Phase 1 flagellin (fliC).